The following is a 380-amino-acid chain: G-protein coupled receptor (380 aa).

A run of 7 helical transmembrane segments spans residues valine 26–isoleucine 46, leucine 60–valine 80, phenylalanine 97–threonine 117, valine 145–isoleucine 165, alanine 184–leucine 204, isoleucine 220–alanine 240, and valine 275–isoleucine 295. Cysteine 95 and cysteine 170 are disulfide-bonded. Residues serine 328–glycine 380 form a disordered region.

Belongs to the G-protein coupled receptor 1 family.

It is found in the host membrane. This chain is G-protein coupled receptor, found in Elephas maximus (Indian elephant).